A 553-amino-acid polypeptide reads, in one-letter code: Glucose-6-phosphate isomerase (553 aa).

Glutamate 357 acts as the Proton donor in catalysis. Residues histidine 388 and lysine 514 contribute to the active site. Residues 527 to 553 (ADSPAAQSDSSTDALVRRYRTERGRTA) are disordered. The segment covering 541 to 553 (LVRRYRTERGRTA) has biased composition (basic and acidic residues).

This sequence belongs to the GPI family.

Its subcellular location is the cytoplasm. It catalyses the reaction alpha-D-glucose 6-phosphate = beta-D-fructose 6-phosphate. The protein operates within carbohydrate biosynthesis; gluconeogenesis. It functions in the pathway carbohydrate degradation; glycolysis; D-glyceraldehyde 3-phosphate and glycerone phosphate from D-glucose: step 2/4. Functionally, catalyzes the reversible isomerization of glucose-6-phosphate to fructose-6-phosphate. The chain is Glucose-6-phosphate isomerase from Mycolicibacterium vanbaalenii (strain DSM 7251 / JCM 13017 / BCRC 16820 / KCTC 9966 / NRRL B-24157 / PYR-1) (Mycobacterium vanbaalenii).